Consider the following 415-residue polypeptide: Enolase (415 aa).

Gln-161 is a binding site for (2R)-2-phosphoglycerate. Glu-203 functions as the Proton donor in the catalytic mechanism. Asp-240, Glu-281, and Asp-308 together coordinate Mg(2+). Lys-333, Arg-362, Ser-363, and Lys-384 together coordinate (2R)-2-phosphoglycerate. Residue Lys-333 is the Proton acceptor of the active site.

Belongs to the enolase family. Requires Mg(2+) as cofactor.

The protein localises to the cytoplasm. It localises to the secreted. The protein resides in the cell surface. It carries out the reaction (2R)-2-phosphoglycerate = phosphoenolpyruvate + H2O. Its pathway is carbohydrate degradation; glycolysis; pyruvate from D-glyceraldehyde 3-phosphate: step 4/5. Its function is as follows. Catalyzes the reversible conversion of 2-phosphoglycerate (2-PG) into phosphoenolpyruvate (PEP). It is essential for the degradation of carbohydrates via glycolysis. The polypeptide is Enolase (Campylobacter hominis (strain ATCC BAA-381 / DSM 21671 / CCUG 45161 / LMG 19568 / NCTC 13146 / CH001A)).